The following is a 147-amino-acid chain: Protein MGF 100-3L (147 aa).

The protein belongs to the asfivirus MGF 100 family.

Functionally, plays a role in virus cell tropism, and may be required for efficient virus replication in macrophages. The chain is Protein MGF 100-3L from African swine fever virus (isolate Tick/Malawi/Lil 20-1/1983) (ASFV).